A 261-amino-acid chain; its full sequence is Gap junction beta-6 protein (261 aa).

Residues 1–22 are Cytoplasmic-facing; the sequence is MDWGTLHTFVGGVNKHSTSIGK. Residues 23–45 form a helical membrane-spanning segment; sequence VWVTVLFVFRVMILVVAAQEVWG. Topologically, residues 46–75 are extracellular; sequence DEQEDFVCNTLQPGCRNVCYDHFFPVSHIR. Residues 76–98 traverse the membrane as a helical segment; that stretch reads LWALQLIFVSTPALLVAMHVAYY. Over 99–131 the chain is Cytoplasmic; the sequence is RHEAARRFRRGETRSEFKDLEDIKRQKVRIEGS. Residues 132 to 154 form a helical membrane-spanning segment; the sequence is LWWTYTSSIFFRIVFEAAFMYVF. The Extracellular segment spans residues 155–192; sequence YFLYNGYHLPWVLKCGIQPCPNLVDCFISRPTEKTVFT. The helical transmembrane segment at 193 to 215 threads the bilayer; it reads IFMISASVICMLLNVAELCYLLL. Residues 216–261 are Cytoplasmic-facing; that stretch reads KVCFRRSKRAQTQKAPPNHALKESKQNEMNELISEGGQNAITGFPS.

Belongs to the connexin family. Beta-type (group I) subfamily. In terms of assembly, a connexon is composed of a hexamer of connexins. Interacts with CNST.

It is found in the cell membrane. The protein resides in the cell junction. It localises to the gap junction. Functionally, one gap junction consists of a cluster of closely packed pairs of transmembrane channels, the connexons, through which materials of low MW diffuse from one cell to a neighboring cell. The chain is Gap junction beta-6 protein (GJB6) from Bos taurus (Bovine).